A 142-amino-acid chain; its full sequence is Large ribosomal subunit protein uL13 (142 aa).

Belongs to the universal ribosomal protein uL13 family. As to quaternary structure, part of the 50S ribosomal subunit.

Its function is as follows. This protein is one of the early assembly proteins of the 50S ribosomal subunit, although it is not seen to bind rRNA by itself. It is important during the early stages of 50S assembly. The sequence is that of Large ribosomal subunit protein uL13 from Chromobacterium violaceum (strain ATCC 12472 / DSM 30191 / JCM 1249 / CCUG 213 / NBRC 12614 / NCIMB 9131 / NCTC 9757 / MK).